The primary structure comprises 164 residues: UPF0262 protein Xaut_1232 (164 aa).

The protein belongs to the UPF0262 family.

The sequence is that of UPF0262 protein Xaut_1232 from Xanthobacter autotrophicus (strain ATCC BAA-1158 / Py2).